We begin with the raw amino-acid sequence, 274 residues long: Large ribosomal subunit protein uL2cz/uL2cy (274 aa).

The interval 224–253 is disordered; it reads NPIDHPHGGGEGRAPIGRKKPTTPWGYPAL.

The protein belongs to the universal ribosomal protein uL2 family. In terms of assembly, part of the 50S ribosomal subunit.

Its subcellular location is the plastid. The protein is Large ribosomal subunit protein uL2cz/uL2cy (rpl2-A) of Epifagus virginiana (Beechdrops).